The primary structure comprises 148 residues: Endothelial differentiation-related factor 1 (148 aa).

Ala2 bears the N-acetylalanine mark. Ser4 carries the post-translational modification Phosphoserine. Lys25 carries the post-translational modification N6-methyllysine. The span at 33–42 (RRGEDVETSK) shows a compositional bias: basic and acidic residues. Residues 33-66 (RRGEDVETSKKWAAGQNKQHSITKNTAKLDRETE) are disordered. Positions 37–113 (DVETSKKWAA…QVIADYESGR (77 aa)) are interaction with NR5A2, PPARG and NR1H3. The segment covering 48-58 (QNKQHSITKNT) has biased composition (polar residues). Positions 69–108 (HHDRVTLEVGKVIQQGRQSKGLTQKDLATKINEKPQVIAD) are interaction with TBP and NR5A1. The IQ motif signature appears at 81–88 (IQQGRQSK). The 55-residue stretch at 81–135 (IQQGRQSKGLTQKDLATKINEKPQVIADYESGRAIPNNQVLGKIERAIGLKLRGK) folds into the HTH cro/C1-type domain. The segment at residues 92 to 111 (QKDLATKINEKPQVIADYES) is a DNA-binding region (H-T-H motif).

As to quaternary structure, interacts with TBP and the transcription factor IID (TFIID) complex, NR5A2, NR1H3 and PPARG. Interaction with TBP is regulated by phosphorylation. Binds NR5A1, ATF1, FOS and JUN via their conserved basic region. Binding to calmodulin is regulated by calcium and phosphorylation of the IQ motif. Post-translationally, phosphorylated (by PKA and PKC). In terms of tissue distribution, expressed in brain, liver, lung, kidney and heart (at protein level). Ubiquitously expressed. More abundant in heart, pancreas, liver, intestine and adipose tissues.

Its subcellular location is the cytoplasm. The protein resides in the nucleus. Its function is as follows. Transcriptional coactivator stimulating NR5A1 and ligand-dependent NR1H3/LXRA and PPARG transcriptional activities. Enhances the DNA-binding activity of ATF1, ATF2, CREB1 and NR5A1. Regulates nitric oxid synthase activity probably by sequestering calmodulin in the cytoplasm. May function in endothelial cells differentiation, hormone-induced cardiomyocytes hypertrophy and lipid metabolism. The sequence is that of Endothelial differentiation-related factor 1 (EDF1) from Homo sapiens (Human).